Consider the following 309-residue polypeptide: Probable RuBisCO transcriptional regulator (309 aa).

In terms of domain architecture, HTH lysR-type spans 5–62 (FTLQQLRILKAIATEKSFTRAAEVLFVSQPSLSKQIKTLESRLNISLLNRENNIVSLT). A DNA-binding region (H-T-H motif) is located at residues 22–41 (FTRAAEVLFVSQPSLSKQIK).

The protein belongs to the LysR transcriptional regulatory family.

Its subcellular location is the plastid. The protein resides in the chloroplast. Trans-acting transcriptional regulator of RuBisCO genes (rbcL and rbcS) expression. This Trieres chinensis (Marine centric diatom) protein is Probable RuBisCO transcriptional regulator (rbcR).